The following is a 398-amino-acid chain: Ornithine aminotransferase (398 aa).

An N6-(pyridoxal phosphate)lysine modification is found at lysine 256.

Belongs to the class-III pyridoxal-phosphate-dependent aminotransferase family. OAT subfamily. Pyridoxal 5'-phosphate serves as cofactor.

The protein localises to the cytoplasm. The catalysed reaction is a 2-oxocarboxylate + L-ornithine = L-glutamate 5-semialdehyde + an L-alpha-amino acid. The protein operates within amino-acid biosynthesis; L-proline biosynthesis; L-glutamate 5-semialdehyde from L-ornithine: step 1/1. In terms of biological role, catalyzes the interconversion of ornithine to glutamate semialdehyde. This chain is Ornithine aminotransferase, found in Oceanobacillus iheyensis (strain DSM 14371 / CIP 107618 / JCM 11309 / KCTC 3954 / HTE831).